The chain runs to 226 residues: UPF0177 protein YbdJ (226 aa).

The next 5 membrane-spanning stretches (helical) occupy residues 16-36 (LLLL…LGIF), 43-63 (FAFN…IVIA), 81-101 (LLFI…AHHL), 169-189 (FAWV…ISLV), and 206-226 (LHSS…FWVF).

It belongs to the UPF0177 family.

Its subcellular location is the cell membrane. The polypeptide is UPF0177 protein YbdJ (ybdJ) (Lactococcus lactis subsp. lactis (strain IL1403) (Streptococcus lactis)).